Consider the following 256-residue polypeptide: Hydroxyacylglutathione hydrolase (256 aa).

Zn(2+)-binding residues include His58, His60, Asp62, His63, His116, Asp135, and His173.

The protein belongs to the metallo-beta-lactamase superfamily. Glyoxalase II family. As to quaternary structure, monomer. Zn(2+) is required as a cofactor.

It carries out the reaction an S-(2-hydroxyacyl)glutathione + H2O = a 2-hydroxy carboxylate + glutathione + H(+). It functions in the pathway secondary metabolite metabolism; methylglyoxal degradation; (R)-lactate from methylglyoxal: step 2/2. Its function is as follows. Thiolesterase that catalyzes the hydrolysis of S-D-lactoyl-glutathione to form glutathione and D-lactic acid. In Hyphomonas neptunium (strain ATCC 15444), this protein is Hydroxyacylglutathione hydrolase.